The chain runs to 2148 residues: Polyketide synthase 1 (2148 aa).

Residues F19 to H261 form an N-terminal acylcarrier protein transacylase domain (SAT) region. Residues E394–D829 form the Ketosynthase family 3 (KS3) domain. Residues C566, H701, and H745 each act as for beta-ketoacyl synthase activity in the active site. Residues A929–W1233 form a malonyl-CoA:ACP transacylase (MAT) domain region. Residue S1018 is the For acyl/malonyl transferase activity of the active site. Positions T1310–P1624 are product template (PT) domain. The interval H1314 to V1447 is N-terminal hotdog fold. The PKS/mFAS DH domain maps to H1314–N1619. H1346 functions as the Proton acceptor; for dehydratase activity in the catalytic mechanism. The segment at L1474–N1619 is C-terminal hotdog fold. D1533 serves as the catalytic Proton donor; for dehydratase activity. Positions N1619–H1655 are disordered. The Carrier 1 domain maps to R1678 to T1752. An O-(pantetheine 4'-phosphoryl)serine modification is found at S1712. Residues A1755–P1790 show a composition bias toward low complexity. Residues A1755–G1796 are disordered. Positions S1793–H1870 constitute a Carrier 2 domain. O-(pantetheine 4'-phosphoryl)serine is present on S1830. The thioesterase (TE) domain stretch occupies residues L1882–I2146. The active-site For thioesterase activity is S1973.

Polyketide synthase; part of the Pks1 gene cluster that mediates the biosynthesis of an anthraquinone derivative pigment that contributes to conidial pigmentation that provides protection from UV radiation, heat and cold stress. The polyketide synthase Pks1 produces 1-acetyl-2,4,6,8-tetrahydroxy-9,10-anthraquinone though condensation of acetyl-CoA with malonyl-CoA. The dehydratase EthD and the laccase Mlac1 further convert the anthraquinone derivative into the final conidial pigment. This Metarhizium brunneum (strain ARSEF 3297) protein is Polyketide synthase 1.